Here is a 432-residue protein sequence, read N- to C-terminus: Glycosyltransferase 6 (432 aa).

At 1–18 (MGKPGGAKTRTAVCLSDG) the chain is on the cytoplasmic side. A helical; Signal-anchor for type II membrane protein transmembrane segment spans residues 19–39 (VFFLAGAFMSLTLVWSYFSIF). Topologically, residues 40–432 (SPSFTSLRHD…LPFDYPNEAW (393 aa)) are lumenal. The N-linked (GlcNAc...) asparagine glycan is linked to N315.

This sequence belongs to the glycosyltransferase 34 family.

It is found in the golgi apparatus membrane. Probable glycosyltransferase that may be involved in the biosynthesis of xyloglucan. The polypeptide is Glycosyltransferase 6 (GT6) (Arabidopsis thaliana (Mouse-ear cress)).